Consider the following 282-residue polypeptide: Undecaprenyl-diphosphatase (282 aa).

Helical transmembrane passes span 40–60 (GAAF…IYFM), 89–109 (WMIA…KDDI), 113–133 (LRSL…LSIA), 150–170 (ISEI…MALI), 196–216 (FSFL…LYKT), 230–250 (IAVA…FLLT), and 258–278 (GIFI…IGTG).

The protein belongs to the UppP family.

The protein resides in the cell inner membrane. The enzyme catalyses di-trans,octa-cis-undecaprenyl diphosphate + H2O = di-trans,octa-cis-undecaprenyl phosphate + phosphate + H(+). Its function is as follows. Catalyzes the dephosphorylation of undecaprenyl diphosphate (UPP). Confers resistance to bacitracin. This chain is Undecaprenyl-diphosphatase, found in Chlorobaculum parvum (strain DSM 263 / NCIMB 8327) (Chlorobium vibrioforme subsp. thiosulfatophilum).